The chain runs to 401 residues: Beta-ketoadipyl-CoA thiolase (401 aa).

Cys-90 serves as the catalytic Acyl-thioester intermediate. Active-site proton acceptor residues include His-357 and Cys-387.

This sequence belongs to the thiolase-like superfamily. Thiolase family.

It catalyses the reaction succinyl-CoA + acetyl-CoA = 3-oxoadipyl-CoA + CoA. It participates in aromatic compound metabolism; phenylacetate degradation. Catalyzes thiolytic cleavage of beta-ketoadipyl-CoA to succinyl-CoA and acetyl-CoA. This chain is Beta-ketoadipyl-CoA thiolase (paaJ), found in Escherichia coli.